A 365-amino-acid chain; its full sequence is TD and POZ domain-containing protein 1 (365 aa).

The region spanning 19 to 149 (KFCYKWTISN…EDQLTICCKV (131 aa)) is the MATH domain. The BTB domain maps to 188–250 (TDCCLLVAGH…EMMGFIYTGK (63 aa)).

It belongs to the Tdpoz family.

The protein is TD and POZ domain-containing protein 1 of Mus musculus (Mouse).